A 91-amino-acid chain; its full sequence is Large ribosomal subunit protein bL27 (91 aa).

The interval 1-24 is disordered; sequence MAHKKGVGSSRNGRDSNPKMRGVK.

It belongs to the bacterial ribosomal protein bL27 family.

The polypeptide is Large ribosomal subunit protein bL27 (Chloroflexus aggregans (strain MD-66 / DSM 9485)).